The primary structure comprises 415 residues: Histone acetyltransferase type B subunit 2 (415 aa).

WD repeat units lie at residues 118 to 158, 163 to 203, 211 to 251, 256 to 296, and 307 to 347; these read ENNF…KTAI, PHED…ATDL, THKD…EPVS, PESE…TKSA, and GHSD…EEQA. The interval 349-353 is interaction with the histone H4 N-terminus; it reads EDAED. One copy of the WD 6 repeat lies at 364 to 404; that stretch reads GHTGAVTDLSWCPYKDWTIGSVADDNIVHLWEIGKTLLNAE.

It belongs to the WD repeat RBAP46/RBAP48/MSI1 family. In terms of assembly, component of the HAT-B complex composed of at least HAT1 and HAT2. The HAT-B complex binds to histone H4 tail.

The protein resides in the cytoplasm. The protein localises to the nucleus. Functionally, regulatory subunit of the histone acetylase B (HAT-B) complex. The complex acetylates 'Lys-12' of histone H4 which is required for telomeric silencing. The protein is Histone acetyltransferase type B subunit 2 (HAT2) of Debaryomyces hansenii (strain ATCC 36239 / CBS 767 / BCRC 21394 / JCM 1990 / NBRC 0083 / IGC 2968) (Yeast).